The primary structure comprises 818 residues: Cytosolic phospholipase A2 delta (818 aa).

The C2 domain occupies 5–124; that stretch reads SPGGPPGHPY…LPGKLLRKTF (120 aa). Ca(2+)-binding residues include Asp-38, Asp-44, Asp-94, Asp-96, and Asp-102. Residues 273-818 enclose the PLA2c domain; it reads GCPEELAVHL…LEARPPRAQT (546 aa). 330 to 331 is a substrate binding site; the sequence is GG. Ser-361 serves as the catalytic Nucleophile. Asp-647 functions as the Proton acceptor in the catalytic mechanism.

Ca(2+) serves as cofactor. As to expression, expressed in stratified squamous epithelia, such as those in skin and cervix, but not in other tissues. Strongly expressed in the upper spinous layer of the psoriatic epidermis, expressed weakly and discontinuously in atopic dermatitis and mycosis fungoides, and not detected in the epidermis of normal skin.

Its subcellular location is the cytoplasm. It is found in the cytosol. The protein localises to the membrane. The catalysed reaction is a 1,2-diacyl-sn-glycero-3-phosphocholine + H2O = a 1-acyl-sn-glycero-3-phosphocholine + a fatty acid + H(+). It catalyses the reaction 1-hexadecanoyl-2-(5Z,8Z,11Z,14Z-eicosatetraenoyl)-sn-glycero-3-phosphocholine + H2O = 1-hexadecanoyl-sn-glycero-3-phosphocholine + (5Z,8Z,11Z,14Z)-eicosatetraenoate + H(+). The enzyme catalyses 1-hexadecanoyl-2-(9Z,12Z-octadecadienoyl)-sn-glycero-3-phosphocholine + H2O = (9Z,12Z)-octadecadienoate + 1-hexadecanoyl-sn-glycero-3-phosphocholine + H(+). It carries out the reaction 1-hexadecanoyl-2-(9Z-octadecenoyl)-sn-glycero-3-phosphocholine + H2O = 1-hexadecanoyl-sn-glycero-3-phosphocholine + (9Z)-octadecenoate + H(+). The catalysed reaction is 1-hexadecanoyl-2-(5Z,8Z,11Z,14Z-eicosatetraenoyl)-sn-glycero-3-phosphoethanolamine + H2O = 1-hexadecanoyl-sn-glycero-3-phosphoethanolamine + (5Z,8Z,11Z,14Z)-eicosatetraenoate + H(+). It catalyses the reaction 1-hexadecanoyl-2-(9Z,12Z-octadecadienoyl)-sn-glycero-3-phosphoethanolamine + H2O = 1-hexadecanoyl-sn-glycero-3-phosphoethanolamine + (9Z,12Z)-octadecadienoate + H(+). It participates in lipid metabolism; fatty acid metabolism. With respect to regulation, stimulated by cytosolic Ca(2+). In terms of biological role, calcium-dependent phospholipase A2 that selectively hydrolyzes glycerophospholipids in the sn-2 position. Has a preference for linoleic acid at the sn-2 position. The polypeptide is Cytosolic phospholipase A2 delta (Homo sapiens (Human)).